The following is a 498-amino-acid chain: Lysine--tRNA ligase (498 aa).

Mg(2+) is bound by residues E408 and E415.

This sequence belongs to the class-II aminoacyl-tRNA synthetase family. Homodimer. It depends on Mg(2+) as a cofactor.

The protein resides in the cytoplasm. The catalysed reaction is tRNA(Lys) + L-lysine + ATP = L-lysyl-tRNA(Lys) + AMP + diphosphate. The sequence is that of Lysine--tRNA ligase from Listeria monocytogenes serovar 1/2a (strain ATCC BAA-679 / EGD-e).